The chain runs to 124 residues: Small ribosomal subunit protein bS6 (124 aa).

The disordered stretch occupies residues 100–124 (KERRAARQKTGETQENVSQEESSTN). Polar residues predominate over residues 110 to 124 (GETQENVSQEESSTN).

This sequence belongs to the bacterial ribosomal protein bS6 family.

Functionally, binds together with bS18 to 16S ribosomal RNA. This is Small ribosomal subunit protein bS6 from Fervidobacterium nodosum (strain ATCC 35602 / DSM 5306 / Rt17-B1).